Reading from the N-terminus, the 437-residue chain is MMSVTVETLENLERKVVLSLPWSEINAETDKKLKQTQRRAKIDGFRPGKAPLKMIAQMYGASAQNDVINELVQRRFHDVAVAQELKVAGFPRFEGVEEQDDKESFKVAAIFEVFPEVVIGDLSAQEVEKVTASVGDAEVDQTVEILRKQRTRFNHVEREARNSDRVIIDFEGKIDGEPFAGGASKNYAFVLGAGQMLPEFEAGVVGMKAGESKDVTVNFPEEYHGKDVAGKTAVFTITLNNVSEATLPEVDADFAKALGIADGDVAKMREEVQKNVSREVERRVNEQTKESVMNALLKAVELKAPVALVNEEAARLANEMKQNFVNQGMADAANLDLPLDIFKEQAERRVSLGLILAKLVDENKLEPTEEQVKAVVANFAESYEDPQEVIDWYYAEPSRLQAPTSLAIESNVVDFVLGKAKVNEKALSFDEVMGAQA.

Residues 163 to 248 form the PPIase FKBP-type domain; that stretch reads SDRVIIDFEG…LNNVSEATLP (86 aa).

This sequence belongs to the FKBP-type PPIase family. Tig subfamily.

The protein resides in the cytoplasm. It catalyses the reaction [protein]-peptidylproline (omega=180) = [protein]-peptidylproline (omega=0). In terms of biological role, involved in protein export. Acts as a chaperone by maintaining the newly synthesized protein in an open conformation. Functions as a peptidyl-prolyl cis-trans isomerase. The sequence is that of Trigger factor from Neisseria meningitidis serogroup C / serotype 2a (strain ATCC 700532 / DSM 15464 / FAM18).